Consider the following 215-residue polypeptide: Probable phosphoglycerate mutase GpmB (215 aa).

Substrate-binding positions include 8 to 15, 21 to 22, R58, K60, 82 to 85, 104 to 105, and 151 to 152; these read RHGETQWN, QG, ELDM, RR, and GI. The Tele-phosphohistidine intermediate role is filled by H9. The active-site Proton donor/acceptor is E82.

Belongs to the phosphoglycerate mutase family. GpmB subfamily.

The catalysed reaction is (2R)-2-phosphoglycerate = (2R)-3-phosphoglycerate. It functions in the pathway carbohydrate degradation; glycolysis; pyruvate from D-glyceraldehyde 3-phosphate: step 3/5. The chain is Probable phosphoglycerate mutase GpmB from Salmonella typhi.